Here is a 122-residue protein sequence, read N- to C-terminus: Large ribosomal subunit protein uL14 (122 aa).

Belongs to the universal ribosomal protein uL14 family. In terms of assembly, part of the 50S ribosomal subunit. Forms a cluster with proteins L3 and L19. In the 70S ribosome, L14 and L19 interact and together make contacts with the 16S rRNA in bridges B5 and B8.

In terms of biological role, binds to 23S rRNA. Forms part of two intersubunit bridges in the 70S ribosome. The polypeptide is Large ribosomal subunit protein uL14 (Wolinella succinogenes (strain ATCC 29543 / DSM 1740 / CCUG 13145 / JCM 31913 / LMG 7466 / NCTC 11488 / FDC 602W) (Vibrio succinogenes)).